We begin with the raw amino-acid sequence, 468 residues long: Putative ankyrin repeat protein R873 (468 aa).

14 ANK repeats span residues 38–68 (IKTD…KHNL), 78–107 (SLNE…DIEG), 109–137 (DNCA…NFRA), 138–167 (NNDK…DIRS), 169–197 (NDCS…NIRT), 198–227 (NDDW…DIRS), 229–257 (DDHA…NIIA), 258–287 (EDNY…NITS), 289–316 (YYTI…NIRD), 317–346 (CDSS…DFRE), 348–376 (DDLT…DFRV), 378–406 (DDYP…DVRA), 407–436 (EDDY…NIRA), and 438–466 (NDYA…VLNK).

The protein is Putative ankyrin repeat protein R873 of Acanthamoeba polyphaga mimivirus (APMV).